Reading from the N-terminus, the 294-residue chain is MPRGDSEQVRYCARFSYLWLKFSLIIYSTVFWLIGGLVLSVGIYAEAERQKYKTLESAFLAPAIILILLGVVMFIVSFIGVLASLRDNLCLLQSFMYILGICLVMELIGGIVALIFRNQTIDFLNDNIRRGIENYYDDLDFKNIMDFVQKKFKCCGGEDYRDWSKNQYHDCSAPGPLACGVPYTCCIRNTTDVVNTMCGYKTIDKERLNAQNIIHVRGCTNAVLIWFMDNYTIMAGLLLGILLPQFLGVLLTLLYITRVEDIILEHSVTDGLLGPGAKSRTDTAGTGCCLCYPD.

Topologically, residues 1-23 (MPRGDSEQVRYCARFSYLWLKFS) are cytoplasmic. Residues 24-44 (LIIYSTVFWLIGGLVLSVGIY) form a helical membrane-spanning segment. Topologically, residues 45–62 (AEAERQKYKTLESAFLAP) are extracellular. A helical transmembrane segment spans residues 63–83 (AIILILLGVVMFIVSFIGVLA). Residues 84–94 (SLRDNLCLLQS) lie on the Cytoplasmic side of the membrane. A helical transmembrane segment spans residues 95 to 115 (FMYILGICLVMELIGGIVALI). At 116-235 (FRNQTIDFLN…WFMDNYTIMA (120 aa)) the chain is on the extracellular side. Residue Asn118 is glycosylated (N-linked (GlcNAc...) asparagine). 4 disulfides stabilise this stretch: Cys154/Cys219, Cys155/Cys185, Cys171/Cys179, and Cys186/Cys198. 2 N-linked (GlcNAc...) asparagine glycosylation sites follow: Asn189 and Asn230. Residues 236–256 (GLLLGILLPQFLGVLLTLLYI) traverse the membrane as a helical segment. Residues 257–294 (TRVEDIILEHSVTDGLLGPGAKSRTDTAGTGCCLCYPD) are Cytoplasmic-facing.

It belongs to the tetraspanin (TM4SF) family. In terms of assembly, interacts with ADAM10; the interaction influences ADAM10 substrate specificity, endocytosis and turnover. In terms of processing, palmitoylated.

It localises to the cell membrane. The protein resides in the late endosome membrane. Part of TspanC8 subgroup, composed of 6 members that interact with the transmembrane metalloprotease ADAM10. This interaction is required for ADAM10 exit from the endoplasmic reticulum and for enzymatic maturation and trafficking to the cell surface as well as substrate specificity. Different TspanC8/ADAM10 complexes have distinct substrates. Promotes ADAM10-mediated cleavage of CDH2. Negatively regulates ligand-induced Notch activity probably by regulating ADAM10 activity. The chain is Tetraspanin-15 (Tspan15) from Mus musculus (Mouse).